The sequence spans 118 residues: HTH-type transcriptional regulator CmtR (118 aa).

Residues 3–97 (TCEMRESALA…ELVQVVLAVD (95 aa)) enclose the HTH arsR-type domain. The Cd(2+) site is built by Cys-57, Cys-61, and Cys-102.

Homodimer.

In terms of biological role, metal-responsive transcriptional repressor for the cmt operon. Binding of cadmium or lead causes the repressor to dissociate from the DNA. This chain is HTH-type transcriptional regulator CmtR (cmtR), found in Mycobacterium bovis (strain ATCC BAA-935 / AF2122/97).